The chain runs to 61 residues: SPbeta prophage-derived uncharacterized protein YotK (61 aa).

Residues 7–57 (SIQTLLNKMDRQMKTVKEAIEEKDLQRAHRNLINLADNNEELMQEIRWVKK) are a coiled coil.

The polypeptide is SPbeta prophage-derived uncharacterized protein YotK (yotK) (Bacillus subtilis (strain 168)).